The following is a 160-amino-acid chain: Fimbrial protein (160 aa).

Residues 1–7 (MKSLQKG) constitute a propeptide, leader sequence. Phe8 is modified (N-methylphenylalanine). A helical membrane pass occupies residues 8 to 28 (FTLIELMIVVAIIGILAAFAI).

It belongs to the N-Me-Phe pilin family. As to quaternary structure, the pili are polar flexible filaments of about 5.4 nanometers diameter and 2.5 micrometers average length; they consist of only a single polypeptide chain arranged in a helical configuration of five subunits per turn in the assembled pilus.

It localises to the fimbrium. It is found in the membrane. This is Fimbrial protein (fimA) from Dichelobacter nodosus (Bacteroides nodosus).